Consider the following 243-residue polypeptide: MYQWIQRDSDVHQRWIWCRRLLIVSLVSALMSVLQVIVFRFVDPPLSMTMVGRYLEAWSDRQWNFRLHYVWCDLEQIAPSVPISLVAAEDQRFPFHHGFDFDAIKNALGRHSRGGHLRGASTISQQVAKNLFLWSGRSFVRKGLEGWYTFWIELFWPKRRILEIYANIAEFGDGVYGVQAAARRYLGKGAADLDESDAAQLAAVLPSPRHYNIQHPGPYIRWRSSWIQRQAKQLGGSAYLDMH.

A helical membrane pass occupies residues 21-43 (LLIVSLVSALMSVLQVIVFRFVD).

Belongs to the glycosyltransferase 51 family.

The protein localises to the cell inner membrane. It catalyses the reaction [GlcNAc-(1-&gt;4)-Mur2Ac(oyl-L-Ala-gamma-D-Glu-L-Lys-D-Ala-D-Ala)](n)-di-trans,octa-cis-undecaprenyl diphosphate + beta-D-GlcNAc-(1-&gt;4)-Mur2Ac(oyl-L-Ala-gamma-D-Glu-L-Lys-D-Ala-D-Ala)-di-trans,octa-cis-undecaprenyl diphosphate = [GlcNAc-(1-&gt;4)-Mur2Ac(oyl-L-Ala-gamma-D-Glu-L-Lys-D-Ala-D-Ala)](n+1)-di-trans,octa-cis-undecaprenyl diphosphate + di-trans,octa-cis-undecaprenyl diphosphate + H(+). Its pathway is cell wall biogenesis; peptidoglycan biosynthesis. Peptidoglycan polymerase that catalyzes glycan chain elongation from lipid-linked precursors. This chain is Biosynthetic peptidoglycan transglycosylase, found in Xylella fastidiosa (strain M12).